The following is a 429-amino-acid chain: Histidine--tRNA ligase (429 aa).

Belongs to the class-II aminoacyl-tRNA synthetase family. Homodimer.

The protein localises to the cytoplasm. The enzyme catalyses tRNA(His) + L-histidine + ATP = L-histidyl-tRNA(His) + AMP + diphosphate + H(+). The protein is Histidine--tRNA ligase of Desulfotalea psychrophila (strain LSv54 / DSM 12343).